A 305-amino-acid polypeptide reads, in one-letter code: UDP-3-O-acyl-N-acetylglucosamine deacetylase (305 aa).

Positions 79, 238, and 242 each coordinate Zn(2+). His-265 functions as the Proton donor in the catalytic mechanism.

The protein belongs to the LpxC family. Zn(2+) is required as a cofactor.

It catalyses the reaction a UDP-3-O-[(3R)-3-hydroxyacyl]-N-acetyl-alpha-D-glucosamine + H2O = a UDP-3-O-[(3R)-3-hydroxyacyl]-alpha-D-glucosamine + acetate. The protein operates within glycolipid biosynthesis; lipid IV(A) biosynthesis; lipid IV(A) from (3R)-3-hydroxytetradecanoyl-[acyl-carrier-protein] and UDP-N-acetyl-alpha-D-glucosamine: step 2/6. Its function is as follows. Catalyzes the hydrolysis of UDP-3-O-myristoyl-N-acetylglucosamine to form UDP-3-O-myristoylglucosamine and acetate, the committed step in lipid A biosynthesis. The polypeptide is UDP-3-O-acyl-N-acetylglucosamine deacetylase (Proteus mirabilis (strain HI4320)).